The following is a 367-amino-acid chain: Glutamate 5-kinase (367 aa).

An ATP-binding site is contributed by K9. The substrate site is built by S49, D136, and N148. Residues 168-169 (TD) and 210-216 (TGGMKSK) contribute to the ATP site. Residues 276–350 (SGQIEIDAGA…GMQSQHIQAR (75 aa)) enclose the PUA domain.

The protein belongs to the glutamate 5-kinase family.

The protein localises to the cytoplasm. It carries out the reaction L-glutamate + ATP = L-glutamyl 5-phosphate + ADP. It participates in amino-acid biosynthesis; L-proline biosynthesis; L-glutamate 5-semialdehyde from L-glutamate: step 1/2. In terms of biological role, catalyzes the transfer of a phosphate group to glutamate to form L-glutamate 5-phosphate. This is Glutamate 5-kinase from Bacillus cereus (strain ZK / E33L).